Reading from the N-terminus, the 77-residue chain is UPF0346 protein LMOf2365_1885 (77 aa).

It belongs to the UPF0346 family.

The sequence is that of UPF0346 protein LMOf2365_1885 from Listeria monocytogenes serotype 4b (strain F2365).